The primary structure comprises 378 residues: Queuine tRNA-ribosyltransferase (378 aa).

D89 (proton acceptor) is an active-site residue. Substrate is bound by residues 89 to 93 (DSGGF), D143, Q187, and G214. Positions 245–251 (GVGKPED) are RNA binding. D264 serves as the catalytic Nucleophile. The tract at residues 269–273 (TRNAR) is RNA binding; important for wobble base 34 recognition. The Zn(2+) site is built by C302, C304, C307, and H333.

The protein belongs to the queuine tRNA-ribosyltransferase family. In terms of assembly, homodimer. Within each dimer, one monomer is responsible for RNA recognition and catalysis, while the other monomer binds to the replacement base PreQ1. Requires Zn(2+) as cofactor.

It carries out the reaction 7-aminomethyl-7-carbaguanine + guanosine(34) in tRNA = 7-aminomethyl-7-carbaguanosine(34) in tRNA + guanine. It participates in tRNA modification; tRNA-queuosine biosynthesis. Its function is as follows. Catalyzes the base-exchange of a guanine (G) residue with the queuine precursor 7-aminomethyl-7-deazaguanine (PreQ1) at position 34 (anticodon wobble position) in tRNAs with GU(N) anticodons (tRNA-Asp, -Asn, -His and -Tyr). Catalysis occurs through a double-displacement mechanism. The nucleophile active site attacks the C1' of nucleotide 34 to detach the guanine base from the RNA, forming a covalent enzyme-RNA intermediate. The proton acceptor active site deprotonates the incoming PreQ1, allowing a nucleophilic attack on the C1' of the ribose to form the product. After dissociation, two additional enzymatic reactions on the tRNA convert PreQ1 to queuine (Q), resulting in the hypermodified nucleoside queuosine (7-(((4,5-cis-dihydroxy-2-cyclopenten-1-yl)amino)methyl)-7-deazaguanosine). This Aeromonas hydrophila subsp. hydrophila (strain ATCC 7966 / DSM 30187 / BCRC 13018 / CCUG 14551 / JCM 1027 / KCTC 2358 / NCIMB 9240 / NCTC 8049) protein is Queuine tRNA-ribosyltransferase.